A 504-amino-acid polypeptide reads, in one-letter code: MEKFQGYLELDRSWKHDFLYPLIFQEYIYAFAHDHGLNRYILLENVSYDRKYSFLIVKRLITRMYQQNHLILSANDSNQNEFFGHKKNLYSQMISEGFAVIVEIPFSLRLISSLAGKEIVKFHNLRSIHSIFPFLEDKFSHLNYILDIRIPYPVHIEILVQTLRSWVKDAPSLHLLRLFLYEYHNWNSIITSNKSISIFSKGNQRLFLFLYNSHIWEYESLFVFFRNQSSHLRSTSSGALLGRSYFYGKLENLVKVFTKDLPVILRFCKDPFMHYVRYQEKSILASKGTFYLMNKWKYYLVNLWQCHFSVWSQPRRIYINQLSKNSLDFMGFLSNVRLNLSVVRSQMLENSFIMDKPIKKFDTIVPIITMIRSLTKAKFCTVLGHPISKPVWADLLDSDIIERFGRICRNLFHYYSGSSRKKSLYRIKYILRLSCVRTLARKHQSTVRAFLKKLGSDFLEEFFTEEEKVLSLILSRDFSISQKLYRGRVWYLDIICIHDLANHS.

This sequence belongs to the intron maturase 2 family. MatK subfamily.

It localises to the plastid. Its subcellular location is the chloroplast. In terms of biological role, usually encoded in the trnK tRNA gene intron. Probably assists in splicing its own and other chloroplast group II introns. In Simmondsia chinensis (Jojoba), this protein is Maturase K.